A 366-amino-acid chain; its full sequence is Chorismate synthase (366 aa).

NADP(+)-binding residues include Arg-48 and Arg-54. FMN is bound by residues Arg-125–Ser-127, Asn-238–Ala-239, Gly-278, Lys-293–Ser-297, and Arg-319.

Belongs to the chorismate synthase family. In terms of assembly, homotetramer. Requires FMNH2 as cofactor.

It carries out the reaction 5-O-(1-carboxyvinyl)-3-phosphoshikimate = chorismate + phosphate. It participates in metabolic intermediate biosynthesis; chorismate biosynthesis; chorismate from D-erythrose 4-phosphate and phosphoenolpyruvate: step 7/7. In terms of biological role, catalyzes the anti-1,4-elimination of the C-3 phosphate and the C-6 proR hydrogen from 5-enolpyruvylshikimate-3-phosphate (EPSP) to yield chorismate, which is the branch point compound that serves as the starting substrate for the three terminal pathways of aromatic amino acid biosynthesis. This reaction introduces a second double bond into the aromatic ring system. This Neisseria meningitidis serogroup A / serotype 4A (strain DSM 15465 / Z2491) protein is Chorismate synthase.